The primary structure comprises 403 residues: MRVLVINSGSSSIKYQLIEMEGEKVLCKGIAERIGIEGSRLVHRVGDEKHVIERELPDHEEALKLILNTLVDEKLGVIKDLKEIDAVGHRVVHGGERFKESVLVDEEVLKAIEEVSPLAPLHNPANLMGIKAAMKLLPGVPNVAVFDTAFHQTIPQKAYLYAIPYEYYEKYKIRRYGFHGTSHRYVSKRAAEILGKKLEELKIITCHIGNGASVAAVKYGKCVDTSMGFTPLEGLVMGTRSGDLDPAIPFFIMEKEGISPQEMYDILNKKSGVYGLSKGFSSDMRDIEEAALKGDEWCKLVLEIYDYRIAKYIGAYAAAMNGVDAIVFTAGVGENSPITREDVCSYLEFLGVKLDKQKNEETIRGKEGIISTPDSRVKVLVVPTNEELMIARDTKEIVEKIGR.

Asn-7 contributes to the Mg(2+) binding site. ATP is bound at residue Lys-14. Residue Arg-90 participates in substrate binding. The active-site Proton donor/acceptor is the Asp-147. Residues 207–211 (HIGNG), 283–285 (DMR), and 331–335 (GVGEN) each bind ATP. Residue Glu-386 participates in Mg(2+) binding.

This sequence belongs to the acetokinase family. As to quaternary structure, homodimer. Mg(2+) serves as cofactor. Requires Mn(2+) as cofactor.

The protein localises to the cytoplasm. The enzyme catalyses acetate + ATP = acetyl phosphate + ADP. The protein operates within metabolic intermediate biosynthesis; acetyl-CoA biosynthesis; acetyl-CoA from acetate: step 1/2. In terms of biological role, catalyzes the formation of acetyl phosphate from acetate and ATP. Can also catalyze the reverse reaction. Phosphorylates propionate (54%) in addition to acetate (100%). Uses GTP (100%), ITP (163%), UTP (56%), and CTP (21%) as phosphoryl donors in addition to ATP (100%). This is Acetate kinase from Thermotoga maritima (strain ATCC 43589 / DSM 3109 / JCM 10099 / NBRC 100826 / MSB8).